The chain runs to 87 residues: Putative defensin-like protein 231 (87 aa).

The N-terminal stretch at 1-26 (MKFATCFLVSYVLVFLVLSVCKEVEA) is a signal peptide. 4 disulfides stabilise this stretch: Cys30/Cys85, Cys40/Cys66, Cys48/Cys79, and Cys64/Cys81.

This sequence belongs to the DEFL family.

The protein resides in the secreted. This chain is Putative defensin-like protein 231 (SCRL25), found in Arabidopsis thaliana (Mouse-ear cress).